We begin with the raw amino-acid sequence, 261 residues long: Global transcriptional regulator CodY (261 aa).

The segment at 1 to 159 (MPNLLEKTRK…ASTVVGIQLL (159 aa)) is GAF domain. The H-T-H motif DNA-binding region spans 207–226 (ASVIADRIGITRSVIVNALR).

The protein belongs to the CodY family.

It localises to the cytoplasm. In terms of biological role, DNA-binding global transcriptional regulator which is involved in the adaptive response to starvation and acts by directly or indirectly controlling the expression of numerous genes in response to nutrient availability. During rapid exponential growth, CodY is highly active and represses genes whose products allow adaptation to nutrient depletion. In Streptococcus agalactiae serotype Ia (strain ATCC 27591 / A909 / CDC SS700), this protein is Global transcriptional regulator CodY.